A 486-amino-acid chain; its full sequence is Glutamyl-tRNA(Gln) amidotransferase subunit A (486 aa).

Residues K76 and S151 each act as charge relay system in the active site. Residue S175 is the Acyl-ester intermediate of the active site.

Belongs to the amidase family. GatA subfamily. In terms of assembly, heterotrimer of A, B and C subunits.

It catalyses the reaction L-glutamyl-tRNA(Gln) + L-glutamine + ATP + H2O = L-glutaminyl-tRNA(Gln) + L-glutamate + ADP + phosphate + H(+). Allows the formation of correctly charged Gln-tRNA(Gln) through the transamidation of misacylated Glu-tRNA(Gln) in organisms which lack glutaminyl-tRNA synthetase. The reaction takes place in the presence of glutamine and ATP through an activated gamma-phospho-Glu-tRNA(Gln). In Nitrosomonas europaea (strain ATCC 19718 / CIP 103999 / KCTC 2705 / NBRC 14298), this protein is Glutamyl-tRNA(Gln) amidotransferase subunit A.